Reading from the N-terminus, the 197-residue chain is Chalcone--flavanone isomerase 2 (197 aa).

Thr23, Asn88, and Thr165 together coordinate substrate.

The protein belongs to the chalcone isomerase family.

The catalysed reaction is a chalcone = a flavanone.. It participates in secondary metabolite biosynthesis; flavonoid biosynthesis. In terms of biological role, catalyzes the intramolecular cyclization of bicyclic chalcones into tricyclic (S)-flavanones. Responsible for the isomerization of 4,2',4',6'-tetrahydroxychalcone (also termed chalcone) into naringenin. In Medicago sativa (Alfalfa), this protein is Chalcone--flavanone isomerase 2 (CHI2).